Reading from the N-terminus, the 574-residue chain is Meiotically up-regulated gene 72 protein (574 aa).

Residues 339–374 (VRAGTPQSSPNFNPAMRRSPVGAASRSPSRSTIGIS) form a disordered region. At threonine 343 the chain carries Phosphothreonine. The span at 364–374 (RSPSRSTIGIS) shows a compositional bias: polar residues. Position 392 is a phosphoserine (serine 392). Disordered stretches follow at residues 422–451 (TSPSGLNPTGRPSRFGGRVRGNPLTMNKAG) and 495–574 (RNRR…RRMD). Over residues 541 to 554 (LYDTSRYPTRNSKP) the composition is skewed to polar residues.

It is found in the cytoplasm. Has a role in meiosis. This Schizosaccharomyces pombe (strain 972 / ATCC 24843) (Fission yeast) protein is Meiotically up-regulated gene 72 protein (mug72).